A 258-amino-acid polypeptide reads, in one-letter code: 4,5-dihydroxyphthalate decarboxylase (258 aa).

It to P.testosteroni DHP decarboxylase.

It catalyses the reaction 4,5-dihydroxyphthalate + H(+) = 3,4-dihydroxybenzoate + CO2. It functions in the pathway xenobiotic degradation; phthalate degradation; 3,4-dihydroxybenzoate from phthalate: step 3/3. This chain is 4,5-dihydroxyphthalate decarboxylase (pht5), found in Pseudomonas putida (Arthrobacter siderocapsulatus).